Consider the following 497-residue polypeptide: Thiamine transporter 1 (497 aa).

Methionine 1 carries the post-translational modification N-acetylmethionine. Residues 1 to 28 are Cytoplasmic-facing; the sequence is MDVPGPVSRRAAAAAATVLLRTARVRRE. Residues 29-46 traverse the membrane as a helical segment; that stretch reads CWFLPTALLCAYGFFASL. The Extracellular segment spans residues 47–72; sequence RPSEPFLTPYLLGPDKNLTEREVFNE. Asparagine 63 carries an N-linked (GlcNAc...) asparagine glycan. A helical transmembrane segment spans residues 73–91; sequence IYPVWTYSYLVLLFPVFLA. Residues 92 to 99 are Cytoplasmic-facing; the sequence is TDYLRYKP. A helical membrane pass occupies residues 100-118; sequence VVLLQGLSLIVTWFMLLYA. At 119–128 the chain is on the extracellular side; sequence QGLLAIQFLE. Residues 129–149 form a helical membrane-spanning segment; it reads FFYGIATATEIAYYSYIYSVV. The Cytoplasmic segment spans residues 150-165; it reads DLGMYQKVTSYCRSAT. Residues 166-185 form a helical membrane-spanning segment; the sequence is LVGFTVGSVLGQILVSVAGW. Residues 186 to 191 lie on the Extracellular side of the membrane; it reads SLFSLN. A helical transmembrane segment spans residues 192–208; the sequence is VISLTCVSVAFAVAWFL. The Cytoplasmic segment spans residues 209 to 285; that stretch reads PMPQKSLFFH…LLVLKVLWND (77 aa). Serine 222 bears the Phosphoserine mark. The helical transmembrane segment at 286 to 310 threads the bilayer; that stretch reads FLMCYSSRPLLCWSVWWALSTCGYF. Over 311 to 337 the chain is Extracellular; the sequence is QVVNYTQGLWEKVMPSRYAAIYNGGVE. Asparagine 314 is a glycosylation site (N-linked (GlcNAc...) asparagine). The chain crosses the membrane as a helical span at residues 338–354; it reads AVSTLLGAVAVFAVGYI. Topologically, residues 355–363 are cytoplasmic; the sequence is KISWSTWGE. Residues 364-380 form a helical membrane-spanning segment; it reads MTLSLFSLLIAAAVYIM. Residues 381–386 lie on the Extracellular side of the membrane; it reads DTVGNI. The helical transmembrane segment at 387–409 threads the bilayer; it reads WVCYASYVVFRIIYMLLITIATF. Topologically, residues 410 to 419 are cytoplasmic; the sequence is QIAANLSMER. The chain crosses the membrane as a helical span at residues 420–443; it reads YALVFGVNTFIALALQTLLTLIVV. At 444 to 455 the chain is on the extracellular side; it reads DASGLGLEITTQ. A helical transmembrane segment spans residues 456–479; the sequence is FLIYASYFALIAVVFLASGAVSVM. The Cytoplasmic segment spans residues 480–497; that stretch reads KKCRKLEDPQSSSQVTTS.

This sequence belongs to the reduced folate carrier (RFC) transporter (TC 2.A.48) family. Interacts with TSPAN1; this interaction increases the stability of SLC19A2. Interacts with TMEM63B. Ubiquitous; most abundant in skeletal and cardiac muscle. Medium expression in placenta, heart, liver and kidney, low in lung.

Its subcellular location is the cell membrane. The catalysed reaction is thiamine(out) + H(+)(in) = thiamine(in) + H(+)(out). The enzyme catalyses pyridoxine(out) + n H(+)(out) = pyridoxine(in) + n H(+)(in). With respect to regulation, pyridoxine transport is inhibited by carbonyl cyanide p-trifluoromethoxyphenylhydrazone (FCCP) and carbonyl cyanide m-chlorophenylhydrazone (CCCP). In terms of biological role, high-affinity transporter for the intake of thiamine. Mediates H(+)-dependent pyridoxine transport. The sequence is that of Thiamine transporter 1 (SLC19A2) from Homo sapiens (Human).